A 118-amino-acid chain; its full sequence is UPF0102 protein Francci3_3586 (118 aa).

This sequence belongs to the UPF0102 family.

The polypeptide is UPF0102 protein Francci3_3586 (Frankia casuarinae (strain DSM 45818 / CECT 9043 / HFP020203 / CcI3)).